The following is a 426-amino-acid chain: Enolase (426 aa).

Gln-163 provides a ligand contact to (2R)-2-phosphoglycerate. Glu-205 acts as the Proton donor in catalysis. 3 residues coordinate Mg(2+): Asp-242, Glu-283, and Asp-310. Lys-335, Arg-364, Ser-365, and Lys-386 together coordinate (2R)-2-phosphoglycerate. The active-site Proton acceptor is the Lys-335.

It belongs to the enolase family. The cofactor is Mg(2+).

It localises to the cytoplasm. The protein localises to the secreted. Its subcellular location is the cell surface. The catalysed reaction is (2R)-2-phosphoglycerate = phosphoenolpyruvate + H2O. The protein operates within carbohydrate degradation; glycolysis; pyruvate from D-glyceraldehyde 3-phosphate: step 4/5. Catalyzes the reversible conversion of 2-phosphoglycerate (2-PG) into phosphoenolpyruvate (PEP). It is essential for the degradation of carbohydrates via glycolysis. The polypeptide is Enolase (Pseudarthrobacter chlorophenolicus (strain ATCC 700700 / DSM 12829 / CIP 107037 / JCM 12360 / KCTC 9906 / NCIMB 13794 / A6) (Arthrobacter chlorophenolicus)).